The chain runs to 311 residues: Coproporphyrin III ferrochelatase 1 (311 aa).

Residues tyrosine 12, arginine 29, 45–46 (RY), serine 53, and tyrosine 124 contribute to the Fe-coproporphyrin III site. Residues histidine 182 and glutamate 263 each contribute to the Fe(2+) site.

This sequence belongs to the ferrochelatase family.

The protein resides in the cytoplasm. It catalyses the reaction Fe-coproporphyrin III + 2 H(+) = coproporphyrin III + Fe(2+). The protein operates within porphyrin-containing compound metabolism; protoheme biosynthesis. Functionally, involved in coproporphyrin-dependent heme b biosynthesis. Catalyzes the insertion of ferrous iron into coproporphyrin III to form Fe-coproporphyrin III. The protein is Coproporphyrin III ferrochelatase 1 of Bacillus cereus (strain ATCC 14579 / DSM 31 / CCUG 7414 / JCM 2152 / NBRC 15305 / NCIMB 9373 / NCTC 2599 / NRRL B-3711).